The primary structure comprises 552 residues: CTP synthase (552 aa).

Residues 1–270 are amidoligase domain; it reads MTKYVFVTGG…DRIICEELKL (270 aa). A CTP-binding site is contributed by serine 13. A UTP-binding site is contributed by serine 13. ATP is bound by residues 14 to 19 and aspartate 71; that span reads SLGKGI. The Mg(2+) site is built by aspartate 71 and glutamate 144. CTP contacts are provided by residues 151 to 153, 191 to 196, and lysine 227; these read DIE and KTKPTQ. Residues 191-196 and lysine 227 each bind UTP; that span reads KTKPTQ. The region spanning 295 to 547 is the Glutamine amidotransferase type-1 domain; sequence TIGMVGKYVD…VEAALANKQA (253 aa). Glycine 356 is an L-glutamine binding site. Cysteine 383 (nucleophile; for glutamine hydrolysis) is an active-site residue. Residues 384-387, glutamate 407, and arginine 473 contribute to the L-glutamine site; that span reads LGMQ. Residues histidine 520 and glutamate 522 contribute to the active site.

It belongs to the CTP synthase family. As to quaternary structure, homotetramer.

It catalyses the reaction UTP + L-glutamine + ATP + H2O = CTP + L-glutamate + ADP + phosphate + 2 H(+). The catalysed reaction is L-glutamine + H2O = L-glutamate + NH4(+). The enzyme catalyses UTP + NH4(+) + ATP = CTP + ADP + phosphate + 2 H(+). It functions in the pathway pyrimidine metabolism; CTP biosynthesis via de novo pathway; CTP from UDP: step 2/2. With respect to regulation, allosterically activated by GTP, when glutamine is the substrate; GTP has no effect on the reaction when ammonia is the substrate. The allosteric effector GTP functions by stabilizing the protein conformation that binds the tetrahedral intermediate(s) formed during glutamine hydrolysis. Inhibited by the product CTP, via allosteric rather than competitive inhibition. Its function is as follows. Catalyzes the ATP-dependent amination of UTP to CTP with either L-glutamine or ammonia as the source of nitrogen. Regulates intracellular CTP levels through interactions with the four ribonucleotide triphosphates. The protein is CTP synthase of Burkholderia cenocepacia (strain HI2424).